Consider the following 84-residue polypeptide: UPF0297 protein Csac_1773 (84 aa).

This sequence belongs to the UPF0297 family.

The polypeptide is UPF0297 protein Csac_1773 (Caldicellulosiruptor saccharolyticus (strain ATCC 43494 / DSM 8903 / Tp8T 6331)).